A 100-amino-acid polypeptide reads, in one-letter code: MVPLWWHISLGVALFVIGAAGVLLRRNILVVLMSLELLLNSVNINFIAFGRYYADFRGQIFAIFVIAITAAEVAVALGILVALVRNKSTLKVDDVTVMKG.

Transmembrane regions (helical) follow at residues 4–24 (LWWH…GVLL), 28–48 (ILVV…NFIA), and 60–80 (IFAI…LGIL).

It belongs to the complex I subunit 4L family. NDH-1 is composed of 14 different subunits. Subunits NuoA, H, J, K, L, M, N constitute the membrane sector of the complex.

Its subcellular location is the cell inner membrane. It catalyses the reaction a quinone + NADH + 5 H(+)(in) = a quinol + NAD(+) + 4 H(+)(out). NDH-1 shuttles electrons from NADH, via FMN and iron-sulfur (Fe-S) centers, to quinones in the respiratory chain. The immediate electron acceptor for the enzyme in this species is believed to be ubiquinone. Couples the redox reaction to proton translocation (for every two electrons transferred, four hydrogen ions are translocated across the cytoplasmic membrane), and thus conserves the redox energy in a proton gradient. The protein is NADH-quinone oxidoreductase subunit K 2 of Sinorhizobium fredii (strain NBRC 101917 / NGR234).